The sequence spans 750 residues: (13E)-labda-7,13-dien-15-ol synthase (750 aa).

Aspartate 284, aspartate 286, aspartate 501, aspartate 505, asparagine 647, threonine 651, and glutamate 655 together coordinate Mg(2+). The short motif at 284–287 (DIDD) is the DXDD motif element. The DDXXD motif signature appears at 501 to 505 (DDLAD).

The protein belongs to the terpene synthase family. Requires Mg(2+) as cofactor.

The catalysed reaction is geranylgeranyl diphosphate + H2O = (13E)-labda-7,13-dien-15-ol + diphosphate. Its pathway is secondary metabolite biosynthesis; terpenoid biosynthesis. Functionally, bifunctional diterpene synthase that directly generates the endocyclic double bond, as well as the hydroxyl group: produces an endocyclic double bond isomer of copalyl diphosphate (CPP), and carries out subsequent replacement of the diphosphate by a hydroxyl group to form (13E)-labda-7,13-dien-15-ol. The chain is (13E)-labda-7,13-dien-15-ol synthase from Selaginella moellendorffii (Spikemoss).